Reading from the N-terminus, the 829-residue chain is E3 ubiquitin-protein ligase Jade-2 (829 aa).

The tract at residues 1 to 52 (MEEKRRKYSISSDNSDTTDGHVTSTSASRCSKLPSSTKSGWPRQNEKKPSEV) is disordered. A phosphoserine mark is found at S9 and S15. Over residues 9–39 (SISSDNSDTTDGHVTSTSASRCSKLPSSTKS) the composition is skewed to polar residues. Residues K32 and K38 each carry the N6-acetyllysine modification. Position 117 is a phosphoserine (S117). The PHD-type 1 zinc finger occupies 199–249 (DVVCDVCRSPEGEDGNEMVFCDKCNVCVHQACYGILKVPTGSWLCRTCALG). The C2HC pre-PHD-type zinc-finger motif lies at 251–285 (QPKCLLCPKRGGALKPTRSGTKWVHVSCALWIPEV). Position 298 is an N6-acetyllysine (K298). The PHD-type 2 zinc finger occupies 309–365 (LSCSLCKECTGTCIQCSMPSCITAFHVTCAFDRGLEMRTILADNDEVKFKSLCQEHS). Disordered stretches follow at residues 362-383 (QEHS…PSQA), 517-555 (REPS…AGPE), and 622-817 (SFMR…REAG). Basic residues predominate over residues 522–535 (RRSKGKKNDSKRKG). The span at 536–552 (REGPKGSSPEKKEKVKA) shows a compositional bias: basic and acidic residues. A compositionally biased stretch (basic residues) spans 637–650 (KARGRTRLPAKKKP). Over residues 776 to 786 (ERPKVSLHFDT) the composition is skewed to basic and acidic residues. The span at 792–806 (FSDEEMSDSEVEAED) shows a compositional bias: acidic residues.

This sequence belongs to the JADE family. In terms of assembly, component of the HBO1 complex composed at least of ING4 or ING5, MYST2/HBO1, MEAF6, and one of JADE1, JADE2 and JADE3. Interacts (via C-terminus) with KDM1A (via AOD/Tower domain).

It carries out the reaction S-ubiquitinyl-[E2 ubiquitin-conjugating enzyme]-L-cysteine + [acceptor protein]-L-lysine = [E2 ubiquitin-conjugating enzyme]-L-cysteine + N(6)-ubiquitinyl-[acceptor protein]-L-lysine.. It functions in the pathway protein modification; protein ubiquitination. In terms of biological role, scaffold subunit of some HBO1 complexes, which have a histone H4 acetyltransferase activity. Acts as a E3 ubiquitin-protein ligase mediating the ubiquitination and subsequent proteasomal degradation of target protein histone demethylase KDM1A. Also acts as a ubiquitin ligase E3 toward itself. Positive regulator of neurogenesis. In Mus musculus (Mouse), this protein is E3 ubiquitin-protein ligase Jade-2 (Jade2).